Reading from the N-terminus, the 266-residue chain is CAAX prenyl protease 2 (266 aa).

3 consecutive transmembrane segments (helical) span residues 1–21, 42–59, and 78–98; these read MGAG…VHLF, LLSN…LRDY, and ITYP…MMQI. Catalysis depends on proton donor/acceptor residues Glu-131 and His-164. 3 helical membrane passes run 186–206, 210–230, and 239–259; these read GFQF…QLTT, IVPI…WLEI, and RLTL…LLYT.

The protein belongs to the peptidase U48 family.

Its subcellular location is the endoplasmic reticulum membrane. The protein localises to the membrane. The enzyme catalyses Hydrolyzes the peptide bond -P2-(S-farnesyl or geranylgeranyl)C-P1'-P2'-P3'-COOH where P1' and P2' are amino acids with aliphatic sidechains and P3' is any C-terminal residue.. In terms of biological role, protease involved in the processing of a variety of prenylated proteins containing the C-terminal CAAX motif, where C is a cysteine modified with an isoprenoid lipid, A is an aliphatic amino acid and X is any C-terminal amino acid. Proteolytically removes the C-terminal three residues of farnesylated and geranylated proteins, leaving the prenylated cysteine as the new C-terminus. The sequence is that of CAAX prenyl protease 2 from Caenorhabditis elegans.